A 485-amino-acid chain; its full sequence is Inosine-5'-monophosphate dehydrogenase (485 aa).

CBS domains follow at residues Ile-97–Val-154 and Met-155–Ser-211. NAD(+)-binding positions include Asp-246 and Gly-295–Gly-297. K(+)-binding residues include Gly-297 and Gly-299. Residue Ser-300 coordinates IMP. Cys-302 contributes to the K(+) binding site. Cys-302 (thioimidate intermediate) is an active-site residue. IMP-binding positions include Asp-335–Gly-337, Gly-358–Ser-359, and Tyr-382–Gly-386. The Proton acceptor role is filled by Arg-398. Residue Glu-409 coordinates IMP. The K(+) site is built by Glu-463, Ser-464, and His-465.

Belongs to the IMPDH/GMPR family. In terms of assembly, homotetramer. It depends on K(+) as a cofactor.

It catalyses the reaction IMP + NAD(+) + H2O = XMP + NADH + H(+). It participates in purine metabolism; XMP biosynthesis via de novo pathway; XMP from IMP: step 1/1. Its activity is regulated as follows. Mycophenolic acid (MPA) is a non-competitive inhibitor that prevents formation of the closed enzyme conformation by binding to the same site as the amobile flap. In contrast, mizoribine monophosphate (MZP) is a competitive inhibitor that induces the closed conformation. MPA is a potent inhibitor of mammalian IMPDHs but a poor inhibitor of the bacterial enzymes. MZP is a more potent inhibitor of bacterial IMPDH. Catalyzes the conversion of inosine 5'-phosphate (IMP) to xanthosine 5'-phosphate (XMP), the first committed and rate-limiting step in the de novo synthesis of guanine nucleotides, and therefore plays an important role in the regulation of cell growth. This is Inosine-5'-monophosphate dehydrogenase from Thermoplasma acidophilum (strain ATCC 25905 / DSM 1728 / JCM 9062 / NBRC 15155 / AMRC-C165).